A 466-amino-acid chain; its full sequence is Histidinol dehydrogenase, chloroplastic (466 aa).

A chloroplast-targeting transit peptide spans 1 to 30; the sequence is MSLNLSRLSLLSSPRISISTHAPRKGYVCC. The NAD(+) site is built by Tyr155, Gln217, and Asn240. Substrate contacts are provided by Ser266, Gln288, and His291. 2 residues coordinate Zn(2+): Gln288 and His291. Catalysis depends on proton acceptor residues Glu356 and His357. Substrate-binding residues include His357, Asp390, Glu444, and His449. Asp390 contacts Zn(2+). His449 contributes to the Zn(2+) binding site.

Belongs to the histidinol dehydrogenase family. The cofactor is Zn(2+).

The protein resides in the plastid. Its subcellular location is the chloroplast. The enzyme catalyses L-histidinol + 2 NAD(+) + H2O = L-histidine + 2 NADH + 3 H(+). The protein operates within amino-acid biosynthesis; L-histidine biosynthesis; L-histidine from 5-phospho-alpha-D-ribose 1-diphosphate: step 9/9. Functionally, catalyzes the sequential NAD-dependent oxidations of L-histidinol to L-histidinaldehyde and then to L-histidine. This Arabidopsis thaliana (Mouse-ear cress) protein is Histidinol dehydrogenase, chloroplastic (HISN8).